Consider the following 320-residue polypeptide: Thymidylate synthase (320 aa).

Residues R27 and 182 to 183 (RR) each bind dUMP. C202 acts as the Nucleophile in catalysis. Residues 222 to 225 (RSAD), N233, and 263 to 265 (HIY) each bind dUMP. (6R)-5,10-methylene-5,6,7,8-tetrahydrofolate is bound at residue D225. Residue A319 participates in (6R)-5,10-methylene-5,6,7,8-tetrahydrofolate binding.

Belongs to the thymidylate synthase family. Bacterial-type ThyA subfamily. As to quaternary structure, homodimer.

The protein resides in the cytoplasm. It catalyses the reaction dUMP + (6R)-5,10-methylene-5,6,7,8-tetrahydrofolate = 7,8-dihydrofolate + dTMP. It functions in the pathway pyrimidine metabolism; dTTP biosynthesis. Its function is as follows. Catalyzes the reductive methylation of 2'-deoxyuridine-5'-monophosphate (dUMP) to 2'-deoxythymidine-5'-monophosphate (dTMP) while utilizing 5,10-methylenetetrahydrofolate (mTHF) as the methyl donor and reductant in the reaction, yielding dihydrofolate (DHF) as a by-product. This enzymatic reaction provides an intracellular de novo source of dTMP, an essential precursor for DNA biosynthesis. In Limosilactobacillus reuteri (strain DSM 20016) (Lactobacillus reuteri), this protein is Thymidylate synthase.